The following is a 119-amino-acid chain: Flagellar transcriptional regulator FlhD (119 aa).

This sequence belongs to the FlhD family. Homodimer; disulfide-linked. Forms a heterohexamer composed of two FlhC and four FlhD subunits. Each FlhC binds a FlhD dimer, forming a heterotrimer, and a hexamer assembles by dimerization of two heterotrimers.

It localises to the cytoplasm. Its function is as follows. Functions in complex with FlhC as a master transcriptional regulator that regulates transcription of several flagellar and non-flagellar operons by binding to their promoter region. Activates expression of class 2 flagellar genes, including fliA, which is a flagellum-specific sigma factor that turns on the class 3 genes. Also regulates genes whose products function in a variety of physiological pathways. This is Flagellar transcriptional regulator FlhD from Yersinia enterocolitica.